The chain runs to 32 residues: Photosystem II reaction center protein Z (32 aa).

Residues 12–32 (IGSAAWAGLVLLVGTLNYLVI) traverse the membrane as a helical segment.

This sequence belongs to the PsbZ family. As to quaternary structure, PSII is composed of 1 copy each of membrane proteins PsbA, PsbB, PsbC, PsbD, PsbE, PsbF, PsbH, PsbI, PsbJ, PsbK, PsbL, PsbM, PsbT, PsbY, PsbZ, Psb30/Ycf12, at least 3 peripheral proteins of the oxygen-evolving complex and a large number of cofactors. It forms dimeric complexes.

It localises to the plastid. The protein localises to the chloroplast thylakoid membrane. Its function is as follows. May control the interaction of photosystem II (PSII) cores with the light-harvesting antenna, regulates electron flow through the 2 photosystem reaction centers. PSII is a light-driven water plastoquinone oxidoreductase, using light energy to abstract electrons from H(2)O, generating a proton gradient subsequently used for ATP formation. The chain is Photosystem II reaction center protein Z from Euglena anabaena (Euglenaria anabaena).